The sequence spans 97 residues: Carboxysome shell protein CsoS1B (97 aa).

The BMC domain maps to 8–93 (ALGMIETRGL…PHKEVEPVLT (86 aa)).

It belongs to the bacterial microcompartments protein family. CsoS1 subfamily. In terms of assembly, homohexamer with a small central pore.

The protein resides in the carboxysome. One of shell proteins of the carboxysome, a polyhedral inclusion where RuBisCO (ribulose bisphosphate carboxylase, ccbL-ccbS) is sequestered. Assembles into hexamers which make sheets that form the facets of the polyhedral carboxysome. The shell probably limits the diffusion of CO(2) into and out of the carboxysome. This chain is Carboxysome shell protein CsoS1B, found in Hydrogenovibrio crunogenus (strain DSM 25203 / XCL-2) (Thiomicrospira crunogena).